The primary structure comprises 291 residues: MMDVAILVDENTRVIVQGITGFQGSFQAKRMLDYGTKVVGGVTPGKGGSEVHGIPVYNTVEEAVAETNADTSIIYVPARFATDAIFEAFDAGLRLVVCVTEGIPLYDEMLIHRKLREVKSMLLGPNCPGVISPGRSKVGLLPDRSFTQGNLGVVSRSGTLTYQICENLTKAGIGQSTVVGIGGDPMPGLTFVDVLKMFEEDEETKAVLLVGEIGGTAEEKAAEFIKQMSKPVVAFIAGRTAPPGKRMGHAGAIIEGSTGTAEAKMAALRDAGARVAETLLDVVKEVRRVLE.

CoA-binding positions include 20 to 23 (TGFQ), K46, and 99 to 101 (VTE). Y162 provides a ligand contact to substrate. The active-site Tele-phosphohistidine intermediate is the H249.

This sequence belongs to the succinate/malate CoA ligase alpha subunit family. Heterotetramer of two alpha and two beta subunits.

It catalyses the reaction succinate + ATP + CoA = succinyl-CoA + ADP + phosphate. The catalysed reaction is GTP + succinate + CoA = succinyl-CoA + GDP + phosphate. It functions in the pathway carbohydrate metabolism; tricarboxylic acid cycle; succinate from succinyl-CoA (ligase route): step 1/1. Succinyl-CoA synthetase functions in the citric acid cycle (TCA), coupling the hydrolysis of succinyl-CoA to the synthesis of either ATP or GTP and thus represents the only step of substrate-level phosphorylation in the TCA. The alpha subunit of the enzyme binds the substrates coenzyme A and phosphate, while succinate binding and nucleotide specificity is provided by the beta subunit. This is Succinate--CoA ligase [ADP-forming] subunit alpha 1 from Archaeoglobus fulgidus (strain ATCC 49558 / DSM 4304 / JCM 9628 / NBRC 100126 / VC-16).